Reading from the N-terminus, the 657-residue chain is Bifunctional lysine-specific demethylase and histidyl-hydroxylase NO66 (657 aa).

2 disordered regions span residues 1–141 (MQKA…QTSP) and 165–198 (KSCP…NSNE). Residues 32-41 (SAKTVDTVTD) are compositionally biased toward polar residues. Residues 55–71 (AEKERRKYLQARVRAEG) show a composition bias toward basic and acidic residues. 2 stretches are compositionally biased toward polar residues: residues 73 to 84 (SASTSSKSNATR) and 132 to 141 (RSQGLEQTSP). Position 133 is a phosphoserine (Ser-133). Position 139 is a phosphothreonine (Thr-139). At Ser-140 the chain carries Phosphoserine. The 140-residue stretch at 315 to 454 (NPSTYLLGLR…NLLETLMPIV (140 aa)) folds into the JmjC domain. 3 residues coordinate Fe cation: His-355, Asp-357, and His-420.

The protein belongs to the ROX family. NO66 subfamily. Fe(2+) is required as a cofactor.

The protein localises to the nucleus. The catalysed reaction is N(6),N(6)-dimethyl-L-lysyl(36)-[histone H3] + 2 2-oxoglutarate + 2 O2 = L-lysyl(36)-[histone H3] + 2 formaldehyde + 2 succinate + 2 CO2. Functionally, oxygenase that can act as both a histone lysine demethylase and a ribosomal histidine hydroxylase. Specifically demethylates 'Lys-4' (H3K4me) and 'Lys-36' (H3K36me) of histone H3, thereby playing a central role in histone code. This is Bifunctional lysine-specific demethylase and histidyl-hydroxylase NO66 from Drosophila erecta (Fruit fly).